We begin with the raw amino-acid sequence, 397 residues long: Trans-2-enoyl-CoA reductase [NADH] (397 aa).

NAD(+) is bound by residues 53–58, 79–80, 116–117, and 144–145; these read GCSNGY, FE, DA, and LA. Tyr230 is a binding site for substrate. Tyr240 functions as the Proton donor in the catalytic mechanism. Residues Lys249 and 276 to 278 contribute to the NAD(+) site; that span reads LVT.

The protein belongs to the TER reductase family. As to quaternary structure, monomer.

It catalyses the reaction a 2,3-saturated acyl-CoA + NAD(+) = a (2E)-enoyl-CoA + NADH + H(+). It functions in the pathway lipid metabolism; fatty acid biosynthesis. Its activity is regulated as follows. Inhibited by lauroyl-CoA. Functionally, involved in the fatty acid synthesis (FAS II). Catalyzes the reduction of the carbon-carbon double bond of crotonyl-CoA to yield butyryl-CoA. In vitro it can also use hexenoyl-CoA and dodecenoyl-CoA as substrates. The polypeptide is Trans-2-enoyl-CoA reductase [NADH] (Treponema denticola (strain ATCC 35405 / DSM 14222 / CIP 103919 / JCM 8153 / KCTC 15104)).